The following is a 75-amino-acid chain: Translational regulator CsrA (75 aa).

The protein belongs to the CsrA/RsmA family. As to quaternary structure, homodimer; the beta-strands of each monomer intercalate to form a hydrophobic core, while the alpha-helices form wings that extend away from the core. Interacts with FliW.

The protein resides in the cytoplasm. Its function is as follows. A translational regulator that binds mRNA to regulate translation initiation and/or mRNA stability. Usually binds in the 5'-UTR at or near the Shine-Dalgarno sequence preventing ribosome-binding, thus repressing translation. Its function is probably anatagonized by FliW. Inhibits translation of flaA mRNA in vitro. Involved in post-transcriptional regulation of flagellin biosynthesis. The protein is Translational regulator CsrA of Campylobacter jejuni subsp. jejuni serotype O:6 (strain 81116 / NCTC 11828).